A 100-amino-acid polypeptide reads, in one-letter code: NADH-quinone oxidoreductase subunit K 1 (100 aa).

3 helical membrane passes run 4–24 (LHSY…GVLV), 29–49 (IVIF…FIAL), and 60–80 (IFVF…LALM).

Belongs to the complex I subunit 4L family. As to quaternary structure, NDH-1 is composed of 14 different subunits. Subunits NuoA, H, J, K, L, M, N constitute the membrane sector of the complex.

The protein localises to the cell inner membrane. The catalysed reaction is a quinone + NADH + 5 H(+)(in) = a quinol + NAD(+) + 4 H(+)(out). Its function is as follows. NDH-1 shuttles electrons from NADH, via FMN and iron-sulfur (Fe-S) centers, to quinones in the respiratory chain. The immediate electron acceptor for the enzyme in this species is believed to be ubiquinone. Couples the redox reaction to proton translocation (for every two electrons transferred, four hydrogen ions are translocated across the cytoplasmic membrane), and thus conserves the redox energy in a proton gradient. The chain is NADH-quinone oxidoreductase subunit K 1 from Geobacter sulfurreducens (strain ATCC 51573 / DSM 12127 / PCA).